A 136-amino-acid polypeptide reads, in one-letter code: Frataxin, mitochondrial (136 aa).

The protein belongs to the frataxin family. In terms of assembly, monomer. Oligomer.

Its subcellular location is the mitochondrion. The enzyme catalyses 4 Fe(2+) + O2 + 4 H(+) = 4 Fe(3+) + 2 H2O. Its function is as follows. Promotes the biosynthesis of heme as well as the assembly and repair of iron-sulfur clusters by delivering Fe(2+) to proteins involved in these pathways. May play a role in the protection against iron-catalyzed oxidative stress through its ability to catalyze the oxidation of Fe(2+) to Fe(3+). May be able to store large amounts of the metal in the form of a ferrihydrite mineral by oligomerization. The polypeptide is Frataxin, mitochondrial (frh-1) (Caenorhabditis elegans).